Reading from the N-terminus, the 455-residue chain is Glutamyl-tRNA reductase (455 aa).

Residues 49–52, serine 109, 114–116, and glutamine 120 contribute to the substrate site; these read TCNR and ETQ. Cysteine 50 acts as the Nucleophile in catalysis. NADP(+) is bound at residue 189–194; that stretch reads GAGKMG.

Belongs to the glutamyl-tRNA reductase family. Homodimer.

The enzyme catalyses (S)-4-amino-5-oxopentanoate + tRNA(Glu) + NADP(+) = L-glutamyl-tRNA(Glu) + NADPH + H(+). It functions in the pathway porphyrin-containing compound metabolism; protoporphyrin-IX biosynthesis; 5-aminolevulinate from L-glutamyl-tRNA(Glu): step 1/2. Catalyzes the NADPH-dependent reduction of glutamyl-tRNA(Glu) to glutamate 1-semialdehyde (GSA). In Geobacillus thermodenitrificans (strain NG80-2), this protein is Glutamyl-tRNA reductase.